We begin with the raw amino-acid sequence, 715 residues long: ATP-dependent zinc metalloprotease YME1L1 (715 aa).

Over 1-237 (MFSLSSTVQP…TNDSLRRTRL (237 aa)) the chain is Mitochondrial matrix. The tract at residues 34 to 54 (NTPVSQKQHRDTVPEHEAPSS) is disordered. Positions 41–52 (QHRDTVPEHEAP) are enriched in basic and acidic residues. A helical transmembrane segment spans residues 238–258 (ILFVLLLFGIYGLLKNPFLSV). Over 259-715 (RFRTTTGLDS…VLEGKKLEVR (457 aa)) the chain is Mitochondrial intermembrane. ATP is bound by residues Val283, Thr325, Gly326, Lys327, Thr328, and Leu329. His541 contributes to the Zn(2+) binding site. The active site involves Glu542. His545 and Asp619 together coordinate Zn(2+).

This sequence in the N-terminal section; belongs to the AAA ATPase family. It in the C-terminal section; belongs to the peptidase M41 family. In terms of assembly, homohexamer; may also form heterohexamers. Exists in several complexes of 600-1100 kDa. Interacts with AFG1L. It depends on Zn(2+) as a cofactor. Post-translationally, proteolytically processed by mitochondrial processing peptidase (MPP) to generate the mature form. Degraded in an OMA1-dependent manner in response to oxidative stress. In terms of tissue distribution, detected in heart and skeletal muscle (at protein level).

It localises to the mitochondrion inner membrane. The protein localises to the mitochondrion. The catalysed reaction is ATP + H2O = ADP + phosphate + H(+). ATP-dependent metalloprotease that catalyzes the degradation of folded and unfolded proteins with a suitable degron sequence in the mitochondrial intermembrane region. Plays an important role in regulating mitochondrial morphology and function by cleaving OPA1 at position S2, giving rise to a form of OPA1 that promotes maintenance of normal mitochondrial structure and mitochondrial protein metabolism. Ensures cell proliferation, maintains normal cristae morphology and complex I respiration activity, promotes antiapoptotic activity and protects mitochondria from the accumulation of oxidatively damaged membrane proteins. Required to control the accumulation of nonassembled respiratory chain subunits (NDUFB6, OX4 and ND1). Involved in the mitochondrial adaptation in response to various signals, such as stress or developmental cues, by mediating degradation of mitochondrial proteins to rewire the mitochondrial proteome. Catalyzes degradation of mitochondrial proteins, such as translocases, lipid transfer proteins and metabolic enzymes in response to nutrient starvation in order to limit mitochondrial biogenesis: mechanistically, YME1L is activated by decreased phosphatidylethanolamine levels caused by LPIN1 activity in response to mTORC1 inhibition. Acts as a regulator of adult neural stem cell self-renewal by promoting mitochondrial proteome rewiring, preserving neural stem and progenitor cells self-renewal. Required for normal, constitutive degradation of PRELID1. Catalyzes the degradation of OMA1 in response to membrane depolarization. Mediates degradation of TIMM17A downstream of the integrated stress response (ISR). Catalyzes degradation of MICU1 when MICU1 is not assembled via an interchain disulfide. In Mus musculus (Mouse), this protein is ATP-dependent zinc metalloprotease YME1L1 (Yme1l1).